The primary structure comprises 146 residues: Large ribosomal subunit protein uL15 (146 aa).

The segment covering 1–13 (MKLHELRPAEGSK) has biased composition (basic and acidic residues). Positions 1 to 54 (MKLHELRPAEGSKKAPKRVGRGNGSGLGKTAGKGHKGQNARSGGGVRPGFEGGQ) are disordered. 2 stretches are compositionally biased toward gly residues: residues 21 to 31 (RGNGSGLGKTA) and 42 to 52 (SGGGVRPGFEG).

Belongs to the universal ribosomal protein uL15 family. As to quaternary structure, part of the 50S ribosomal subunit.

Its function is as follows. Binds to the 23S rRNA. This chain is Large ribosomal subunit protein uL15, found in Clostridium novyi (strain NT).